Consider the following 121-residue polypeptide: Large ribosomal subunit protein bL20 (121 aa).

Belongs to the bacterial ribosomal protein bL20 family.

Binds directly to 23S ribosomal RNA and is necessary for the in vitro assembly process of the 50S ribosomal subunit. It is not involved in the protein synthesizing functions of that subunit. This Moorella thermoacetica (strain ATCC 39073 / JCM 9320) protein is Large ribosomal subunit protein bL20.